The primary structure comprises 495 residues: Potassium voltage-gated channel subfamily A member 1 (495 aa).

The disordered stretch occupies residues methionine 1 to histidine 30. Positions methionine 1–glutamate 128 are tetramerization domain. The Cytoplasmic portion of the chain corresponds to methionine 1 to glycine 164. Residue serine 23 is modified to Phosphoserine. A helical transmembrane segment spans residues proline 165–leucine 186. At glutamate 187–proline 220 the chain is on the extracellular side. Asparagine 207 carries an N-linked (GlcNAc...) asparagine glycan. A helical membrane pass occupies residues phenylalanine 221–alanine 242. Residue cysteine 243 is the site of S-palmitoyl cysteine attachment. The Cytoplasmic segment spans residues cysteine 243 to isoleucine 253. Residues methionine 254–alanine 274 form a helical membrane-spanning segment. Residues glutamate 275–serine 287 lie on the Extracellular side of the membrane. The helical; Voltage-sensor transmembrane segment at leucine 288 to histidine 308 threads the bilayer. Residues serine 309–methionine 323 are Cytoplasmic-facing. The S4-S5 linker stretch occupies residues lysine 310–methionine 323. Serine 322 is modified (phosphoserine; by PKA). The helical transmembrane segment at arginine 324–tyrosine 345 threads the bilayer. At phenylalanine 346 to isoleucine 359 the chain is on the extracellular side. Residues proline 360 to threonine 371 constitute an intramembrane region (helical). The Selectivity filter signature appears at threonine 372–aspartate 377. An intramembrane segment occupies threonine 372–tyrosine 379. Residues proline 380–lysine 386 are Extracellular-facing. The chain crosses the membrane as a helical span at residues isoleucine 387 to tyrosine 415. Topologically, residues histidine 416–valine 495 are cytoplasmic. Serine 437 and serine 439 each carry phosphoserine. Phosphoserine; by PKA is present on serine 446. The short motif at threonine 493–valine 495 is the PDZ-binding element.

Belongs to the potassium channel family. A (Shaker) (TC 1.A.1.2) subfamily. Kv1.1/KCNA1 sub-subfamily. Homotetramer and heterotetramer with other channel-forming alpha subunits, such as KCNA2, KCNA4, KCNA5, KCNA6 and KCNA7. Channel activity is regulated by interaction with the beta subunits KCNAB1 and KCNAB2. Identified in a complex with KCNA2 and KCNAB2. Interacts (via C-terminus) with the PDZ domains of DLG1, DLG2 and DLG4. Interacts with LGI1 within a complex containing LGI1, KCNA4 and KCNAB1. Interacts (via N-terminus) with STX1A; this promotes channel inactivation. Interacts (via N-terminus) with the heterodimer formed by GNB1 and GNG2; this promotes channel inactivation. Can interact simultaneously with STX1A and the heterodimer formed by GNB1 and GNG2. Interacts (via cytoplasmic N-terminal domain) with KCNRG; this inhibits channel activity. Interacts with ANK3; this inhibits channel activity. Interacts with ADAM11. N-glycosylated. In terms of processing, palmitoylated on Cys-243; which may be required for membrane targeting. Post-translationally, phosphorylated on tyrosine residues. Phosphorylation increases in response to NRG1; this inhibits channel activity. Phosphorylation at Ser-446 regulates channel activity by down-regulating expression at the cell membrane. In terms of tissue distribution, detected in brain. Expressed in cerebellar cortex basket cell terminals, the area surround the Purkinje cell soma, and the pinceaux expansions encircling the axon initial segment (at protein level). Detected in the juxtaparanodal regions of the nodes of Ranvier in myelinated axons. Detected in the paranodal region in sciatic nerve. Detected on cell bodies in cerebellum, dorsal and ventral cochlear nucleus, pontine reticular nucleus, mesencephalic trigeminal nucleus, motor trigeminal nucleus and the pricipal sensory trigeminal nucleus. Detected in terminal fields of basket cells in the cerebellum corpus medullare. Detected in hippocampus CA3 pyramidal neurons and in the hilus and stratum moleculare of the dentate gyrus. Detected in the central nucleus and the external nucleus of the inferior colliculus. Detected in fiber tracts in the optic tract, external medullary lamina, stria terminalis, medulla, ventral pallidum and substantia nigra. Detected in neurons from dorsal root ganglion. Detected in neurons in the medial nucleus of the trapezoid body. Detected in midbrain dopamine neuron axon terminals. Detected in brain cortex. Detected in brainstem. Detected in juxtaparanodal regions of the nodes of Ranvier in the vagus nerve, but only at very low levels in the heart. Detected in the islet of Langerhans. Detected at the luminal membrane in distal convoluted tubules in the kidney (at protein level). Detected in hippocampus, thalamus, neocortex and ventral brain cortex, including the piriform and entorhinal cortex and the amygdala. Detected in midbrain dopamine neurons. Detected in heart atrium, ventricle, sinoatrial node and atrioventricular node.

It is found in the cell membrane. It localises to the cell projection. Its subcellular location is the axon. The protein localises to the membrane. The protein resides in the perikaryon. It is found in the dendrite. It localises to the cell junction. Its subcellular location is the synapse. The protein localises to the cytoplasmic vesicle. The protein resides in the endoplasmic reticulum. It is found in the presynaptic cell membrane. It localises to the presynapse. The enzyme catalyses K(+)(in) = K(+)(out). Its activity is regulated as follows. Inhibited by 4-aminopyridine (4-AP), tetraethylammonium (TEA) and dendrotoxin (DTX), but not by charybdotoxin (CTX). Its function is as follows. Voltage-gated potassium channel that mediates transmembrane potassium transport in excitable membranes, primarily in the brain and the central nervous system, but also in the kidney. Contributes to the regulation of the membrane potential and nerve signaling, and prevents neuronal hyperexcitability. Forms tetrameric potassium-selective channels through which potassium ions pass in accordance with their electrochemical gradient. The channel alternates between opened and closed conformations in response to the voltage difference across the membrane. Can form functional homotetrameric channels and heterotetrameric channels that contain variable proportions of KCNA1, KCNA2, KCNA4, KCNA5, KCNA6, KCNA7, and possibly other family members as well; channel properties depend on the type of alpha subunits that are part of the channel. Channel properties are modulated by cytoplasmic beta subunits that regulate the subcellular location of the alpha subunits and promote rapid inactivation of delayed rectifier potassium channels. In vivo, membranes probably contain a mixture of heteromeric potassium channel complexes, making it difficult to assign currents observed in intact tissues to any particular potassium channel family member. Homotetrameric KCNA1 forms a delayed-rectifier potassium channel that opens in response to membrane depolarization, followed by slow spontaneous channel closure. In contrast, a heterotetrameric channel formed by KCNA1 and KCNA4 shows rapid inactivation. Regulates neuronal excitability in hippocampus, especially in mossy fibers and medial perforant path axons, preventing neuronal hyperexcitability. May function as down-stream effector for G protein-coupled receptors and inhibit GABAergic inputs to basolateral amygdala neurons. May contribute to the regulation of neurotransmitter release, such as gamma-aminobutyric acid (GABA) release. Plays a role in regulating the generation of action potentials and preventing hyperexcitability in myelinated axons of the vagus nerve, and thereby contributes to the regulation of heart contraction. Required for normal neuromuscular responses. Regulates the frequency of neuronal action potential firing in response to mechanical stimuli, and plays a role in the perception of pain caused by mechanical stimuli, but does not play a role in the perception of pain due to heat stimuli. Required for normal responses to auditory stimuli and precise location of sound sources, but not for sound perception. The use of toxins that block specific channels suggest that it contributes to the regulation of the axonal release of the neurotransmitter dopamine. Required for normal postnatal brain development and normal proliferation of neuronal precursor cells in the brain. Plays a role in the reabsorption of Mg(2+) in the distal convoluted tubules in the kidney and in magnesium ion homeostasis, probably via its effect on the membrane potential. This is Potassium voltage-gated channel subfamily A member 1 from Mus musculus (Mouse).